Consider the following 522-residue polypeptide: Glycogen synthase (522 aa).

The tract at residues 1–29 (MISAVLDTQGDHPQQQAGDRAAPSVPVPG) is disordered. Lys-58 contributes to the ADP-alpha-D-glucose binding site.

The protein belongs to the glycosyltransferase 1 family. Bacterial/plant glycogen synthase subfamily.

It catalyses the reaction [(1-&gt;4)-alpha-D-glucosyl](n) + ADP-alpha-D-glucose = [(1-&gt;4)-alpha-D-glucosyl](n+1) + ADP + H(+). It functions in the pathway glycan biosynthesis; glycogen biosynthesis. Functionally, synthesizes alpha-1,4-glucan chains using ADP-glucose. The protein is Glycogen synthase of Pseudomonas fluorescens (strain ATCC BAA-477 / NRRL B-23932 / Pf-5).